Consider the following 664-residue polypeptide: DNA ligase (664 aa).

NAD(+) contacts are provided by residues 32 to 36 (DKEYD) and 80 to 81 (SL). The N6-AMP-lysine intermediate role is filled by Lys-122. Residues Arg-144, Glu-178, and Lys-314 each coordinate NAD(+). The Zn(2+) site is built by Cys-407, Cys-410, Cys-423, and Cys-429. Positions 587 to 664 (IDENPFMGKT…NEEEFSNKIK (78 aa)) constitute a BRCT domain.

The protein belongs to the NAD-dependent DNA ligase family. LigA subfamily. Mg(2+) serves as cofactor. It depends on Mn(2+) as a cofactor.

The enzyme catalyses NAD(+) + (deoxyribonucleotide)n-3'-hydroxyl + 5'-phospho-(deoxyribonucleotide)m = (deoxyribonucleotide)n+m + AMP + beta-nicotinamide D-nucleotide.. Functionally, DNA ligase that catalyzes the formation of phosphodiester linkages between 5'-phosphoryl and 3'-hydroxyl groups in double-stranded DNA using NAD as a coenzyme and as the energy source for the reaction. It is essential for DNA replication and repair of damaged DNA. This chain is DNA ligase, found in Clostridium botulinum (strain 657 / Type Ba4).